Consider the following 309-residue polypeptide: MEMO1 family protein C4H3.04c (309 aa).

It belongs to the MEMO1 family.

The chain is MEMO1 family protein C4H3.04c from Schizosaccharomyces pombe (strain 972 / ATCC 24843) (Fission yeast).